The sequence spans 159 residues: Endoribonuclease YbeY (159 aa).

Zn(2+) contacts are provided by histidine 125, histidine 129, and histidine 135.

It belongs to the endoribonuclease YbeY family. It depends on Zn(2+) as a cofactor.

It localises to the cytoplasm. Single strand-specific metallo-endoribonuclease involved in late-stage 70S ribosome quality control and in maturation of the 3' terminus of the 16S rRNA. The chain is Endoribonuclease YbeY from Thermoanaerobacter pseudethanolicus (strain ATCC 33223 / 39E) (Clostridium thermohydrosulfuricum).